The following is a 180-amino-acid chain: Major urinary protein 17 (180 aa).

The first 18 residues, 1 to 18, serve as a signal peptide directing secretion; the sequence is MKMLLLLCLGLTLVCVHA. The cysteines at positions 82 and 175 are disulfide-linked.

Belongs to the calycin superfamily. Lipocalin family. As to expression, because of their involvement in the coordination of social behavior, Mup proteins are thought to exhibit variable expression depending upon gender, age and status of the studied individuals. Expression may also be strain-specific: in strains C57BL/6J and 129S7, transcriptional support is lacking for Mup17.

It localises to the secreted. In terms of biological role, major urinary proteins (Mups) bind pheromones, thus stabilize them and allow slow release into the air from urine marks. May protect pheromones from oxidation. May also act as pheromones themselves. In this context, they play a role in the regulation of social behaviors, such as aggression, mating, pup-suckling, territory establishment and dominance. The chain is Major urinary protein 17 (Mup17) from Mus musculus (Mouse).